A 360-amino-acid chain; its full sequence is Putative F-box protein At3g47150 (360 aa).

The region spanning 6–56 is the F-box domain; sequence NTTQIYIPLDLQINILLRLPVKSLLRFRCVSKLWCSIITSHDFRNRHFNIT.

The polypeptide is Putative F-box protein At3g47150 (Arabidopsis thaliana (Mouse-ear cress)).